Here is a 217-residue protein sequence, read N- to C-terminus: Adapter protein MecA (217 aa).

Belongs to the MecA family. As to quaternary structure, homodimer.

Functionally, enables the recognition and targeting of unfolded and aggregated proteins to the ClpC protease or to other proteins involved in proteolysis. The sequence is that of Adapter protein MecA from Listeria monocytogenes serotype 4b (strain CLIP80459).